Consider the following 220-residue polypeptide: Mediator of RNA polymerase II transcription subunit 19 (220 aa).

Residues 171–220 (AFDLDGTGKSQSGSNSGNNSKKRKNKSSGSSMATPTHSDSHEDMKRRRLE) are disordered. Residues 178–189 (GKSQSGSNSGNN) show a composition bias toward low complexity. Residues 208–220 (SDSHEDMKRRRLE) show a composition bias toward basic and acidic residues.

This sequence belongs to the Mediator complex subunit 19 family. As to quaternary structure, component of the Mediator complex, which is composed of at least 21 subunits that form three structurally distinct submodules. The Mediator head module contains MED6, MED8, MED11, SRB4/MED17, SRB5/MED18, ROX3/MED19, SRB2/MED20 and SRB6/MED22, the middle module contains MED1, MED4, NUT1/MED5, MED7, CSE2/MED9, NUT2/MED10, SRB7/MED21 and SOH1/MED31, and the tail module contains MED2, PGD1/MED3, RGR1/MED14, GAL11/MED15 and SIN4/MED16. The head and the middle modules interact directly with RNA polymerase II, whereas the elongated tail module interacts with gene-specific regulatory proteins.

Its subcellular location is the nucleus. Its function is as follows. Component of the Mediator complex, a coactivator involved in the regulated transcription of nearly all RNA polymerase II-dependent genes. Mediator functions as a bridge to convey information from gene-specific regulatory proteins to the basal RNA polymerase II transcription machinery. The Mediator complex, having a compact conformation in its free form, is recruited to promoters by direct interactions with regulatory proteins and serves for the assembly of a functional preinitiation complex with RNA polymerase II and the general transcription factors. The Mediator complex unfolds to an extended conformation and partially surrounds RNA polymerase II, specifically interacting with the unphosphorylated form of the C-terminal domain (CTD) of RNA polymerase II. The Mediator complex dissociates from the RNA polymerase II holoenzyme and stays at the promoter when transcriptional elongation begins. The polypeptide is Mediator of RNA polymerase II transcription subunit 19 (ROX3) (Saccharomyces cerevisiae (strain ATCC 204508 / S288c) (Baker's yeast)).